We begin with the raw amino-acid sequence, 391 residues long: Cytochrome P450 165A3 (391 aa).

Positions 1–22 (MFEEKNALRGTEIHRRERFDPG) are disordered. Residue C342 coordinates heme.

This sequence belongs to the cytochrome P450 family. It depends on heme as a cofactor.

The protein operates within antibiotic biosynthesis; vancomycin biosynthesis. Its function is as follows. Involved in the coupling of aromatic side chains of the heptapeptide of vancomycin. In Amycolatopsis orientalis (Nocardia orientalis), this protein is Cytochrome P450 165A3 (cyp165A3).